We begin with the raw amino-acid sequence, 145 residues long: UPF0179 protein MmarC6_0993 (145 aa).

This sequence belongs to the UPF0179 family.

In Methanococcus maripaludis (strain C6 / ATCC BAA-1332), this protein is UPF0179 protein MmarC6_0993.